Consider the following 430-residue polypeptide: 3-phosphoshikimate 1-carboxyvinyltransferase (430 aa).

3 residues coordinate 3-phosphoshikimate: Lys23, Ser24, and Arg28. Lys23 provides a ligand contact to phosphoenolpyruvate. 2 residues coordinate phosphoenolpyruvate: Gly95 and Arg123. 4 residues coordinate 3-phosphoshikimate: Ser169, Gln171, Asp315, and Lys342. Residue Gln171 coordinates phosphoenolpyruvate. The active-site Proton acceptor is the Asp315. Phosphoenolpyruvate is bound by residues Arg346 and Arg388.

The protein belongs to the EPSP synthase family. As to quaternary structure, monomer.

It localises to the cytoplasm. It catalyses the reaction 3-phosphoshikimate + phosphoenolpyruvate = 5-O-(1-carboxyvinyl)-3-phosphoshikimate + phosphate. It participates in metabolic intermediate biosynthesis; chorismate biosynthesis; chorismate from D-erythrose 4-phosphate and phosphoenolpyruvate: step 6/7. Catalyzes the transfer of the enolpyruvyl moiety of phosphoenolpyruvate (PEP) to the 5-hydroxyl of shikimate-3-phosphate (S3P) to produce enolpyruvyl shikimate-3-phosphate and inorganic phosphate. This is 3-phosphoshikimate 1-carboxyvinyltransferase from Streptococcus pyogenes serotype M3 (strain ATCC BAA-595 / MGAS315).